A 147-amino-acid polypeptide reads, in one-letter code: Acidic phospholipase A2 S3-24 (147 aa).

Residues 1-19 (MYPAHLLVLLAVCVSLLGA) form the signal peptide. The propeptide occupies 20-27 (SDMPPQPL). 7 disulfides stabilise this stretch: Cys38–Cys99, Cys54–Cys146, Cys56–Cys72, Cys71–Cys127, Cys78–Cys120, Cys88–Cys113, and Cys106–Cys118. Residues Tyr55, Gly57, and Gly59 each contribute to the Ca(2+) site. His75 is an active-site residue. Asp76 serves as a coordination point for Ca(2+). Asp121 is an active-site residue.

This sequence belongs to the phospholipase A2 family. Group I subfamily. D49 sub-subfamily. The cofactor is Ca(2+). Expressed by the venom gland.

Its subcellular location is the secreted. It carries out the reaction a 1,2-diacyl-sn-glycero-3-phosphocholine + H2O = a 1-acyl-sn-glycero-3-phosphocholine + a fatty acid + H(+). Snake venom phospholipase A2 (PLA2) that inhibits collagen-induced platelet aggregation. PLA2 catalyzes the calcium-dependent hydrolysis of the 2-acyl groups in 3-sn-phosphoglycerides. The polypeptide is Acidic phospholipase A2 S3-24 (Austrelaps superbus (Lowland copperhead snake)).